The primary structure comprises 366 residues: Phosphate acyltransferase (366 aa).

The interval 334-366 (ESAKNKETQSKQASTKNTAPKTSETTKESQQSL) is disordered. Over residues 343–366 (SKQASTKNTAPKTSETTKESQQSL) the composition is skewed to polar residues.

This sequence belongs to the PlsX family. In terms of assembly, homodimer. Probably interacts with PlsY.

Its subcellular location is the cytoplasm. It catalyses the reaction a fatty acyl-[ACP] + phosphate = an acyl phosphate + holo-[ACP]. It functions in the pathway lipid metabolism; phospholipid metabolism. Functionally, catalyzes the reversible formation of acyl-phosphate (acyl-PO(4)) from acyl-[acyl-carrier-protein] (acyl-ACP). This enzyme utilizes acyl-ACP as fatty acyl donor, but not acyl-CoA. The protein is Phosphate acyltransferase of Onion yellows phytoplasma (strain OY-M).